The sequence spans 376 residues: Protein-arginine rhamnosyltransferase (376 aa).

DTDP-beta-L-rhamnose contacts are provided by residues 13–16, tyrosine 192, 252–254, and 270–274; these read NYGD, MAQ, and RGEDS. 14–15 is a dTDP binding site; it reads YG. Aspartate 16 serves as the catalytic Proton acceptor. DTDP is bound by residues tyrosine 192, 252–254, and 270–274; these read MAQ and RGEDS. Glutamate 272 is a catalytic residue.

Belongs to the glycosyltransferase 104 family.

The enzyme catalyses dTDP-beta-L-rhamnose + L-arginyl-[protein] = N(omega)-(alpha-L-rhamnosyl)-L-arginyl-[protein] + dTDP + H(+). Functionally, protein-arginine rhamnosyltransferase that catalyzes the transfer of a single rhamnose to elongation factor P (EF-P) on 'Lys-32', a modification required for EF-P-dependent rescue of polyproline stalled ribosomes. In Pseudomonas aeruginosa (strain ATCC 15692 / DSM 22644 / CIP 104116 / JCM 14847 / LMG 12228 / 1C / PRS 101 / PAO1), this protein is Protein-arginine rhamnosyltransferase.